The sequence spans 380 residues: S-phase entry cyclin-6 (380 aa).

Residues 63–91 (PRGKLQRDSTHLEKTRKRQLSNDSTDPIE) form a disordered region.

Belongs to the cyclin family. Cyclin AB subfamily.

Functionally, involved in G1/S and or S phase progression. Interacts with CDC28. This chain is S-phase entry cyclin-6 (CLB6), found in Saccharomyces cerevisiae (strain ATCC 204508 / S288c) (Baker's yeast).